A 275-amino-acid chain; its full sequence is MEKSEKKPMRFSFRRRPKSVSVDRSEAHAADVSIGQYLEKLNYVSQEEAIKIDQELFSEYAYSVDQLMELAGLSVATAVAKSYPRGPMPKGGTVLVCCGPGNNGGDGLVCARHLKLFGYEPSVFYPKQSNKPLFQNLTKQCQEMEVPFLSFLPDSQLVSDSYNLVVDALFGFSFKPPVRPEFNDVMDKLKKVKIPVVSIDIPSGWDVETGGDADSLQPECLVSLTAPKRCSRNFKGRFHWLGGRFVPPALAAKYELNLPPYPGTDCCLLLTPPPS.

Residues 49 to 258 form the YjeF N-terminal domain; it reads AIKIDQELFS…ALAAKYELNL (210 aa). 102–106 contacts (6S)-NADPHX; sequence NNGGD. Asparagine 103 and aspartate 167 together coordinate K(+). Residues 171-177 and aspartate 200 each bind (6S)-NADPHX; that span reads GFSFKPP. Serine 203 serves as a coordination point for K(+).

It belongs to the NnrE/AIBP family. Requires K(+) as cofactor.

The catalysed reaction is (6R)-NADHX = (6S)-NADHX. It carries out the reaction (6R)-NADPHX = (6S)-NADPHX. In terms of biological role, catalyzes the epimerization of the S- and R-forms of NAD(P)HX, a damaged form of NAD(P)H that is a result of enzymatic or heat-dependent hydration. This is a prerequisite for the S-specific NAD(P)H-hydrate dehydratase to allow the repair of both epimers of NAD(P)HX. The chain is NAD(P)H-hydrate epimerase from Ixodes scapularis (Black-legged tick).